The following is a 394-amino-acid chain: Probable glycosyltransferase FCK3 (394 aa).

This sequence belongs to the afumC glycosyltransferase family.

It functions in the pathway secondary metabolite biosynthesis. Functionally, probable glycosyl transferase; part of the gene cluster that mediates the biosynthesis of cytokinins such as fusatin, fusatinic acids or 8-oxofusatin, known for their growth promoting and anti-senescence activities toward host plants. FCK1 is a bifunctional enzyme that performs the first steps in the biosynthesis of Fusarium cytokinins. It first condenses adenosine monophosphate (AMP) with dimethylallyl diphosphate (DMAPP) to yield isoprenyl adenosine monophosphate. It then catalyzes the removal of the phosphoribose to produce isopentenylaldehyde. The cytochrome P450 monooxygenase then converts isopentenylaldehyde to trans-zeatin. A condensation step converts trans-zeatin to fusatin which is further modified to produce fusatinic acid. The mechanism for oxidation of fusatin to fusatinic acid remains unknown. 8-oxofusatin could be produced through several pathways, via direct oxygenation of fusatin, or via the 8-oxo-pentenyladenine intermediate which itself must arise from either the prenylation of 8-oxo-AMP by FCK1 and/or oxygenation of isopentenylaldehyde. Both the FCK3 and FCK4 enzymes act downstream of the identified cytokinins to produce yet unidentified compounds. This is Probable glycosyltransferase FCK3 from Fusarium pseudograminearum (strain CS3096) (Wheat and barley crown-rot fungus).